We begin with the raw amino-acid sequence, 495 residues long: Telomere-binding protein subunit alpha (495 aa).

The segment covering 1–13 (MSTAAKQNRSTSR) has biased composition (polar residues). Residues 1–31 (MSTAAKQNRSTSRVSKKKTAAPKEGAAKKSD) are disordered.

It belongs to the telombin family. As to quaternary structure, heterodimer of an alpha and a beta subunit.

It is found in the nucleus. It localises to the chromosome. The protein resides in the telomere. Functionally, may function as protective capping of the single-stranded telomeric overhang. May also participate in telomere length regulation during DNA replication. Binds specifically to the T4G4-containing extension on the 3'strand and protects this region of the telomere from nuclease digestion and chemical modification. This chain is Telomere-binding protein subunit alpha (MAC-56A), found in Sterkiella nova (Ciliate).